A 499-amino-acid polypeptide reads, in one-letter code: Tektin-like protein 1 (499 aa).

Coiled-coil stretches lie at residues 197–227 (SMLT…LKTL) and 297–317 (LNEA…MAKN). A Phosphotyrosine modification is found at tyrosine 372.

As to quaternary structure, microtubule inner protein component of sperm flagellar doublet microtubules.

It is found in the cytoplasm. It localises to the cytoskeleton. Its subcellular location is the flagellum axoneme. In terms of biological role, microtubule inner protein (MIP) part of the dynein-decorated doublet microtubules (DMTs) in sperm flagellar axoneme, which is required for motile flagellum beating. Forms an extensive interaction network cross-linking the lumen of axonemal doublet microtubules. The chain is Tektin-like protein 1 from Homo sapiens (Human).